Here is a 348-residue protein sequence, read N- to C-terminus: N-acetyl-gamma-glutamyl-phosphate reductase (348 aa).

The active site involves cysteine 149.

It belongs to the NAGSA dehydrogenase family. Type 1 subfamily.

It localises to the cytoplasm. It carries out the reaction N-acetyl-L-glutamate 5-semialdehyde + phosphate + NADP(+) = N-acetyl-L-glutamyl 5-phosphate + NADPH + H(+). The protein operates within amino-acid biosynthesis; L-arginine biosynthesis; N(2)-acetyl-L-ornithine from L-glutamate: step 3/4. Functionally, catalyzes the NADPH-dependent reduction of N-acetyl-5-glutamyl phosphate to yield N-acetyl-L-glutamate 5-semialdehyde. This chain is N-acetyl-gamma-glutamyl-phosphate reductase, found in Cellvibrio japonicus (strain Ueda107) (Pseudomonas fluorescens subsp. cellulosa).